The primary structure comprises 165 residues: Protein SprT (165 aa).

The 149-residue stretch at 10 to 158 (EACYRQAEHF…CRRCKATLVF (149 aa)) folds into the SprT-like domain. Histidine 69 is a binding site for Zn(2+). The active site involves glutamate 70. Residue histidine 73 participates in Zn(2+) binding.

Belongs to the SprT family. Zn(2+) serves as cofactor.

The protein resides in the cytoplasm. The chain is Protein SprT from Pseudomonas aeruginosa (strain UCBPP-PA14).